A 96-amino-acid polypeptide reads, in one-letter code: Nucleoid-associated protein CF0672 (96 aa).

The protein belongs to the YbaB/EbfC family. In terms of assembly, homodimer.

The protein localises to the cytoplasm. It is found in the nucleoid. Binds to DNA and alters its conformation. May be involved in regulation of gene expression, nucleoid organization and DNA protection. The polypeptide is Nucleoid-associated protein CF0672 (Chlamydia felis (strain Fe/C-56) (Chlamydophila felis)).